A 300-amino-acid polypeptide reads, in one-letter code: GTPase Era (300 aa).

An Era-type G domain is found at 4-172 (KSGFVALIGR…LEKIKKLLPE (169 aa)). The tract at residues 12 to 19 (GRPNVGKS) is G1. 12–19 (GRPNVGKS) serves as a coordination point for GTP. Positions 38-42 (QTTRN) are G2. Residues 59–62 (DTPG) are G3. Residues 59–63 (DTPGV) and 122–125 (NKAD) contribute to the GTP site. The tract at residues 122-125 (NKAD) is G4. Positions 151 to 153 (IAA) are G5. The region spanning 195–281 (IREKILLNLS…NLQLWVKVKK (87 aa)) is the KH type-2 domain.

This sequence belongs to the TRAFAC class TrmE-Era-EngA-EngB-Septin-like GTPase superfamily. Era GTPase family. As to quaternary structure, monomer.

It is found in the cytoplasm. The protein resides in the cell membrane. Its function is as follows. An essential GTPase that binds both GDP and GTP, with rapid nucleotide exchange. Plays a role in 16S rRNA processing and 30S ribosomal subunit biogenesis and possibly also in cell cycle regulation and energy metabolism. This Caldicellulosiruptor saccharolyticus (strain ATCC 43494 / DSM 8903 / Tp8T 6331) protein is GTPase Era.